Reading from the N-terminus, the 400-residue chain is Carnosine N-methyltransferase (400 aa).

The tract at residues 1-51 (MQRRQRAPPASQPAQDGGRSEDVEVQFSAGRLGSAAPAGPPARGTAEDEER) is disordered. Over residues 28-44 (SAGRLGSAAPAGPPARG) the composition is skewed to low complexity. Residues Q155, R158, G199, E220, D286, F287, and C303 each contribute to the S-adenosyl-L-methionine site. Residue D307 coordinates carnosine. Y315 serves as a coordination point for S-adenosyl-L-methionine. Carnosine-binding residues include H338 and Y389.

Belongs to the carnosine N-methyltransferase family. As to quaternary structure, homodimer. Each monomer accommodates one molecule of carnosine in its active pocket, precisely anchoring the histidine imidazole ring such that only N1 is exposed and deprotonated for methylation.

It is found in the cytoplasm. The protein resides in the cytosol. Its subcellular location is the nucleus. The enzyme catalyses carnosine + S-adenosyl-L-methionine = anserine + S-adenosyl-L-homocysteine + H(+). N-methyltransferase that catalyzes the formation of anserine (beta-alanyl-N(Pi)-methyl-L-histidine) from carnosine. Anserine, a methylated derivative of carnosine (beta-alanyl-L-histidine), is an abundant constituent of vertebrate skeletal muscles. Also methylates other L-histidine-containing di- and tripeptides such as Gly-Gly-His, Gly-His and homocarnosine (GABA-His). This chain is Carnosine N-methyltransferase, found in Mus musculus (Mouse).